We begin with the raw amino-acid sequence, 70 residues long: Conotoxin ba3a (70 aa).

Positions 1–20 (MLKIGVMLSIILVLFPLATL) are cleaved as a signal peptide. Positions 21-55 (QLVAERPAAERYAENKQDLNPDERRNYLVDLGVER) are excised as a propeptide.

In terms of tissue distribution, expressed by the venom duct.

It is found in the secreted. This is Conotoxin ba3a from Conus bayani (Bayan's cone).